The primary structure comprises 365 residues: uncharacterized protein (365 aa).

6 helical membrane-spanning segments follow: residues 3-23 (MDTS…LYSI), 60-80 (IGII…LNII), 100-120 (VFLF…LIAI), 141-161 (SGIL…GDEF), 171-191 (AIAS…IPLL), and 280-300 (TALF…LALF).

The protein to S.solfataricus C04034.

It is found in the cell membrane. This is an uncharacterized protein from Methanocaldococcus jannaschii (strain ATCC 43067 / DSM 2661 / JAL-1 / JCM 10045 / NBRC 100440) (Methanococcus jannaschii).